The following is a 242-amino-acid chain: DNA repair protein RecO (242 aa).

The protein belongs to the RecO family.

Its function is as follows. Involved in DNA repair and RecF pathway recombination. The chain is DNA repair protein RecO from Wolbachia pipientis subsp. Culex pipiens (strain wPip).